The primary structure comprises 505 residues: Cell division control protein 6 homolog B (505 aa).

The interval 37–72 is disordered; it reads KRKMRSDSAAVSGNSVSTPKKLKSHLPSSVPNPGMS. Over residues 45–54 the composition is skewed to polar residues; sequence AAVSGNSVST.

This sequence belongs to the CDC6/cdc18 family.

It localises to the nucleus. In terms of biological role, may be involved in the initiation of DNA replication. This is Cell division control protein 6 homolog B from Arabidopsis thaliana (Mouse-ear cress).